The following is a 464-amino-acid chain: ATP-dependent protease ATPase subunit HslU (464 aa).

Residues Val19, 61-66 (GVGKTE), Asp278, Glu342, and Arg414 contribute to the ATP site.

It belongs to the ClpX chaperone family. HslU subfamily. A double ring-shaped homohexamer of HslV is capped on each side by a ring-shaped HslU homohexamer. The assembly of the HslU/HslV complex is dependent on binding of ATP.

The protein resides in the cytoplasm. Functionally, ATPase subunit of a proteasome-like degradation complex; this subunit has chaperone activity. The binding of ATP and its subsequent hydrolysis by HslU are essential for unfolding of protein substrates subsequently hydrolyzed by HslV. HslU recognizes the N-terminal part of its protein substrates and unfolds these before they are guided to HslV for hydrolysis. The chain is ATP-dependent protease ATPase subunit HslU from Halalkalibacterium halodurans (strain ATCC BAA-125 / DSM 18197 / FERM 7344 / JCM 9153 / C-125) (Bacillus halodurans).